The sequence spans 688 residues: Polyribonucleotide nucleotidyltransferase (688 aa).

Mg(2+) contacts are provided by Asp-484 and Asp-490. The region spanning 550 to 609 (PTTEIFNVAPDKIIEIIGQGGRVIREIVEKFEVKIDLNKPSGEVKIMGNKERVLKTKEFI) is the KH domain. Residues 626–688 (DEVLEAQVKR…NKGKIALDLA (63 aa)) form the S1 motif domain.

This sequence belongs to the polyribonucleotide nucleotidyltransferase family. Mg(2+) is required as a cofactor.

The protein localises to the cytoplasm. The catalysed reaction is RNA(n+1) + phosphate = RNA(n) + a ribonucleoside 5'-diphosphate. In terms of biological role, involved in mRNA degradation. Catalyzes the phosphorolysis of single-stranded polyribonucleotides processively in the 3'- to 5'-direction. This is Polyribonucleotide nucleotidyltransferase from Helicobacter acinonychis (strain Sheeba).